Consider the following 339-residue polypeptide: MAVQKHTVALFLAVALVAGPAASYAADAGYAPATPATPAAPATAATPATPATPATPAAVPSGKATTEEQKLIEKINAGFKAAVAAAAVVPPADKYKTFVETFGTATNKAFVEGLASGYADQSKNQLTSKLDAALKLAYEAAQGATPEAKYDAYVATLTEALRVIAGTLEVHAVKPAAEEVKVGAIPAAEVQLIDKVDAAYRTAATAANAAPANDKFTVFENTFNNAIKVSLGAAYDSYKFIPTLVAAVKQAYAAKQATAPEVKYTVSETALKKAVTAMSEAEKEATPAAAATATPTPAAATATATPAAAYATATPAAATATATPAAATATPAAAGGYKV.

An N-terminal signal peptide occupies residues 1–25; that stretch reads MAVQKHTVALFLAVALVAGPAASYA. 9 repeat units span residues 32-34, 35-37, 38-40, 41-43, 44-46, 47-49, 50-52, 53-55, and 56-58. The segment at 32–58 is 9 X 3 AA tandem repeats of [PA]-A-[TA]; the sequence is PATPATPAAPATAATPATPATPATPAA. Residues 36–58 show a composition bias toward low complexity; sequence ATPAAPATAATPATPATPATPAA. The disordered stretch occupies residues 36-65; sequence ATPAAPATAATPATPATPATPAAVPSGKAT. One copy of the 2-1; truncated repeat lies at 285–290; that stretch reads ATPAAA. Positions 285–334 are 6 X 9 AA approximate tandem repeats of T-A-T-A-T-P-A-A-A; sequence ATPAAAATATPTPAAATATATPAAAYATATPAAATATATPAAATATPAAA. 4 tandem repeats follow at residues 292 to 300, 301 to 309, 310 to 318, and 319 to 327. The stretch at 328–334 is one 2-6; truncated repeat; it reads TATPAAA.

Belongs to the Poa p IX/Phl p VI allergen family. Pollen, starch granules.

The polypeptide is Major pollen allergen Lol p 5b (Lolium perenne (Perennial ryegrass)).